The following is a 264-amino-acid chain: Zinc import ATP-binding protein ZnuC (264 aa).

In terms of domain architecture, ABC transporter spans 20–235 (VQLKNIEVTF…PNFIHFFGDQ (216 aa)). 52–59 (GPNGGGKS) is a binding site for ATP.

Belongs to the ABC transporter superfamily. Zinc importer (TC 3.A.1.15.5) family. As to quaternary structure, the complex is composed of two ATP-binding proteins (ZnuC), two transmembrane proteins (ZnuB) and a solute-binding protein (ZnuA).

It is found in the cell inner membrane. The catalysed reaction is Zn(2+)(out) + ATP(in) + H2O(in) = Zn(2+)(in) + ADP(in) + phosphate(in) + H(+)(in). Its function is as follows. Part of the ABC transporter complex ZnuABC involved in zinc import. Responsible for energy coupling to the transport system. This chain is Zinc import ATP-binding protein ZnuC, found in Haemophilus ducreyi (strain 35000HP / ATCC 700724).